The chain runs to 207 residues: Large ribosomal subunit protein uL3 (207 aa).

This sequence belongs to the universal ribosomal protein uL3 family. As to quaternary structure, part of the 50S ribosomal subunit. Forms a cluster with proteins L14 and L19.

In terms of biological role, one of the primary rRNA binding proteins, it binds directly near the 3'-end of the 23S rRNA, where it nucleates assembly of the 50S subunit. This chain is Large ribosomal subunit protein uL3, found in Thermotoga maritima (strain ATCC 43589 / DSM 3109 / JCM 10099 / NBRC 100826 / MSB8).